The primary structure comprises 312 residues: Tyrosine recombinase XerC (312 aa).

Residues 1 to 103 form the Core-binding (CB) domain; sequence MISAFYAFLD…AIKSFSQYCI (103 aa). Residues 124–306 enclose the Tyr recombinase domain; sequence ELPSPITYEQ…SMKLKKQTHE (183 aa). Catalysis depends on residues arginine 164, lysine 188, histidine 258, arginine 261, and histidine 284. The active-site O-(3'-phospho-DNA)-tyrosine intermediate is tyrosine 293.

This sequence belongs to the 'phage' integrase family. XerC subfamily. In terms of assembly, forms a cyclic heterotetrameric complex composed of two molecules of XerC and two molecules of XerD.

Its subcellular location is the cytoplasm. Functionally, site-specific tyrosine recombinase, which acts by catalyzing the cutting and rejoining of the recombining DNA molecules. The XerC-XerD complex is essential to convert dimers of the bacterial chromosome into monomers to permit their segregation at cell division. It also contributes to the segregational stability of plasmids. The polypeptide is Tyrosine recombinase XerC (Chlamydia caviae (strain ATCC VR-813 / DSM 19441 / 03DC25 / GPIC) (Chlamydophila caviae)).